Consider the following 744-residue polypeptide: Protein zyg-11 homolog B (744 aa).

LRR repeat units lie at residues 185–208 (LPRL…LACK), 216–236 (MHHL…VREL), and 237–261 (KHLN…LLEQ).

The protein belongs to the zyg-11 family. (Microbial infection) Interacts with SARS-COV-2 protein ORF10. As to quaternary structure, interacts with ELOC/Elongin C. Part of an E3 ubiquitin ligase complex including ZYG11B, CUL2 and Elongin BC. Post-translationally, (Microbial infection) Ubiquitinated; leading to proteasomal degradation in the presence of herpes simplex virus 1/HHV-1.

The protein resides in the cytoplasm. Serves as substrate adapter subunit in the E3 ubiquitin ligase complex ZYG11B-CUL2-Elongin BC. Acts to target substrates bearing N-terminal degrons for proteasomal degradation with the first four residues of substrates being the key recognition elements. Prefers Nt-Gly but also has the capacity to recognize Nt-Ser, -Ala and -Cys. Involved in the clearance of proteolytic fragments generated by caspase cleavage during apoptosis since N-terminal glycine degrons are strongly enriched at caspase cleavage sites. Also important in the quality control of protein N-myristoylation in which N-terminal glycine degrons are conditionally exposed after a failure of N-myristoylation. In addition, plays a role in the amplification of cGAS to enhance innate immune response. Mechanistically, strengthens the processes of cGAS binding with dsDNA and assembling oligomers and also accelerates and stabilizes cGAS-DNA condensation, thereby enhancing production of antiviral IFNs and inflammatory cytokines. This is Protein zyg-11 homolog B from Homo sapiens (Human).